The sequence spans 578 residues: MPSASCDVLLDDIEDIISQEDSKPQDRQFSRKHVFPKVRRRNTQKYLQEEPRPPSDSTIPGIQKIWIRTWGCSHNNSDGEYMAGQLAAYGYKITENASDADLWLLNSCTVKNPAEDHFRNSIKKAQEENKKVVLAGCVPQAQPRQDYLKGLSIIGVQQIDRVVEVVEETIKGHSVRLLGQKKDNGKRLGGARLDLPKIRKNPLIEIISINTGCLNACTYCKTKHARGNLASYPIDELVERAKQSFQEGVCEIWLTSEDTGAYGRDIGTDLPTLLWKLVEVIPEGAMLRLGMTNPPYILEHLEEMAKILNHPRVYAFLHIPVQSASDSVLMDMKREYCVADFKRVVDFLKEKVPGITIATDIICGFPGETDQDFQETVKLVEEYKFPSLFINQFYPRPGTPAAKAEQVPAHVKKQRTKDLSRVFHSYNPYDHKIGERQQVLVTEESFDSKFYVAHNRFYEQVLVPKNPAFMGKMVEVDIYESGKHFLKGQPVSETRVYTPSISKPLAKGEVSGLTKEFRNRLGNHPNGTSDTCPATQHGSAYSRMVLQMSQYDCALKVATGLALLALLLHFWPDSLLTM.

Residues 63-171 (QKIWIRTWGC…VVEVVEETIK (109 aa)) enclose the MTTase N-terminal domain. [4Fe-4S] cluster is bound by residues C72 and C108. S121 is subject to Phosphoserine. [4Fe-4S] cluster-binding residues include C137, C213, C217, and C220. The Radical SAM core domain maps to 199 to 430 (RKNPLIEIIS…RVFHSYNPYD (232 aa)). The 63-residue stretch at 430–492 (DHKIGERQQV…KHFLKGQPVS (63 aa)) folds into the TRAM domain. At T498 the chain carries Phosphothreonine. A helical membrane pass occupies residues 553 to 570 (CALKVATGLALLALLLHF).

The protein belongs to the methylthiotransferase family. CDKAL1 subfamily. [4Fe-4S] cluster serves as cofactor. As to expression, expressed in pancreas, liver and skeletal muscle, especially in white muscle fibers.

The protein resides in the endoplasmic reticulum membrane. The catalysed reaction is N(6)-L-threonylcarbamoyladenosine(37) in tRNA + (sulfur carrier)-SH + AH2 + 2 S-adenosyl-L-methionine = 2-methylsulfanyl-N(6)-L-threonylcarbamoyladenosine(37) in tRNA + (sulfur carrier)-H + 5'-deoxyadenosine + L-methionine + A + S-adenosyl-L-homocysteine + 2 H(+). Functionally, catalyzes the methylthiolation of N6-threonylcarbamoyladenosine (t(6)A), leading to the formation of 2-methylthio-N6-threonylcarbamoyladenosine (ms(2)t(6)A) at position 37 in tRNAs that read codons beginning with adenine. The chain is Threonylcarbamoyladenosine tRNA methylthiotransferase (Cdkal1) from Mus musculus (Mouse).